The chain runs to 748 residues: Wings apart-like protein homolog 1 (748 aa).

2 disordered regions span residues 23 to 199 (TLAQ…VYAT) and 614 to 644 (EGGCGDEEEEEEGGDESSDEDGVRKDGRLDR). Low complexity predominate over residues 35–64 (PSVRSSDSPDVPDTPDVPVNQLSSPPLSLP). Composition is skewed to polar residues over residues 68–79 (SEGNAETLQNLS) and 87–96 (LSQSSTSSLN). Residues 172–182 (ISSSSNRYSSR) show a composition bias toward low complexity. A WAPL domain is found at 205 to 723 (KPLASGYGSR…KRLYDFTKAT (519 aa)). Residues 616-633 (GCGDEEEEEEGGDESSDE) show a composition bias toward acidic residues. Positions 634–644 (DGVRKDGRLDR) are enriched in basic and acidic residues.

The protein belongs to the WAPL family.

Its subcellular location is the nucleus. Regulator of meiotic chromosome structure and function, playing a role in sister chromatid cohesion, possibly via antagonizing the coh-3/-4 association with axial elements in nuclei during late prophase, cohesin association with chromatin, DNA double strand break repair and polar body positioning following meiotic divisions during oogenesis. Regulates the morphogenesis and temporal assembly of axial elements to control the organization of meiotic chromosomes in pachytene nuclei and is also involved in meiotic chromosomal remodeling in late pachytene nuclei. Required for the removal of the cohesin component scc-1 from mitotic chromosomes. The chain is Wings apart-like protein homolog 1 from Caenorhabditis elegans.